The chain runs to 204 residues: N-(5'-phosphoribosyl)anthranilate isomerase (204 aa).

Belongs to the TrpF family.

The catalysed reaction is N-(5-phospho-beta-D-ribosyl)anthranilate = 1-(2-carboxyphenylamino)-1-deoxy-D-ribulose 5-phosphate. It participates in amino-acid biosynthesis; L-tryptophan biosynthesis; L-tryptophan from chorismate: step 3/5. This Pseudomonas fluorescens (strain Pf0-1) protein is N-(5'-phosphoribosyl)anthranilate isomerase.